We begin with the raw amino-acid sequence, 537 residues long: Methylmalonate-semialdehyde/malonate-semialdehyde dehydrogenase [acylating], mitochondrial (537 aa).

The transit peptide at 1–34 (MAAVAVAAAAAALRARILQVSSKVNSSWQPASSF) directs the protein to the mitochondrion. Residues K49, K54, K57, and K78 each carry the N6-acetyllysine; alternate modification. Residues K49, K54, K57, and K78 each carry the N6-succinyllysine; alternate modification. Position 89 is an N6-acetyllysine (K89). An N6-acetyllysine; alternate mark is found at K119 and K131. 2 positions are modified to N6-succinyllysine; alternate: K119 and K131. Positions 185, 187, 211, 214, 215, and 264 each coordinate NAD(+). S264 is modified (phosphoserine). K300 bears the N6-acetyllysine mark. C319 serves as the catalytic Nucleophile. 2 positions are modified to N6-acetyllysine: K332 and K333. N6-acetyllysine; alternate is present on residues K366 and K378. N6-succinyllysine; alternate occurs at positions 366 and 378. Phosphoserine is present on S382. K393 carries the N6-succinyllysine modification. Residue E419 participates in NAD(+) binding. At K502 the chain carries N6-acetyllysine. An N6-succinyllysine modification is found at K519.

The protein belongs to the aldehyde dehydrogenase family. As to quaternary structure, homodimer. Post-translationally, the N-terminus is blocked.

It is found in the mitochondrion. The enzyme catalyses 2-methyl-3-oxopropanoate + NAD(+) + CoA + H2O = propanoyl-CoA + hydrogencarbonate + NADH + H(+). It catalyses the reaction 3-oxopropanoate + NAD(+) + CoA + H2O = hydrogencarbonate + acetyl-CoA + NADH + H(+). The catalysed reaction is (R)-2-methyl-3-oxopropanoate + NAD(+) + CoA + H2O = propanoyl-CoA + hydrogencarbonate + NADH + H(+). It carries out the reaction (S)-2-methyl-3-oxopropanoate + NAD(+) + CoA + H2O = propanoyl-CoA + hydrogencarbonate + NADH + H(+). Functionally, malonate and methylmalonate semialdehyde dehydrogenase involved in the catabolism of valine, thymine, and compounds catabolized by way of beta-alanine, including uracil and cytidine. This is Methylmalonate-semialdehyde/malonate-semialdehyde dehydrogenase [acylating], mitochondrial (ALDH6A1) from Bos taurus (Bovine).